A 556-amino-acid chain; its full sequence is Endoglucanase 22 (556 aa).

Positions 1–33 (MSRGRARLQPPPPGTRTTTLAAVLVLVLLAVVA) are cleaved as a signal peptide. Aspartate 108 functions as the Nucleophile in the catalytic mechanism. Active-site residues include histidine 450, aspartate 502, and glutamate 511.

This sequence belongs to the glycosyl hydrolase 9 (cellulase E) family.

The protein localises to the secreted. The enzyme catalyses Endohydrolysis of (1-&gt;4)-beta-D-glucosidic linkages in cellulose, lichenin and cereal beta-D-glucans.. The protein is Endoglucanase 22 (GLU11) of Oryza sativa subsp. japonica (Rice).